Consider the following 299-residue polypeptide: Leucine zipper transcription factor-like protein 1 (299 aa).

The interaction with BSS9 stretch occupies residues 145 to 299 (GTTELLNKEI…KRLAKYESED (155 aa)). A coiled-coil region spans residues 145-299 (GTTELLNKEI…KRLAKYESED (155 aa)).

It belongs to the LZTFL1 family. In terms of assembly, self-associates. Interacts with BBS9; the interaction mediates the association of LZTL1 with the BBsome complex and regulates BBSome ciliary trafficking.

Its subcellular location is the cytoplasm. Regulates ciliary localization of the BBSome complex. Together with the BBSome complex, controls SMO ciliary trafficking and contributes to the sonic hedgehog (SHH) pathway regulation. May play a role in neurite outgrowth. May have tumor suppressor function. The sequence is that of Leucine zipper transcription factor-like protein 1 (Lztfl1) from Rattus norvegicus (Rat).